The sequence spans 99 residues: uncharacterized protein (99 aa).

A helical transmembrane segment spans residues 10-29; the sequence is ELSVHTGTVTHTIFVYVFLG.

It is found in the membrane. This is an uncharacterized protein from Schizosaccharomyces pombe (strain 972 / ATCC 24843) (Fission yeast).